The sequence spans 692 residues: MDTFPSLFPPGGDSRLNPEPEFQNMLIDERVRCEHHKHNYQALKIEHKRLQEEYVKSQNELKRVLIEKQASQEKFQLLLEDLRGELVEKARDIEKMKLQVLTPQKLELVKAQLQQELEAPMRERFRTLDEEVERYRAEYNKLRYEYTFLKSEFEHQKEEFTRVSEEEKMKYKSEVARLEKDKEELHNQLLSVDPTRDSKRMEQLVREKTHLLQKLKSLEAEVAELRAEKENSGAQVENVQRIQVRQLAEMQATLRSLEAEKQSAKLQAERLEKELQSSNEQNTCLISKLHRADREISTLASEVKELKHANKLEITDIKLEAARAKSELERERNKIQSELDGLQSDNEILKSTVEHHKALLVEKDRELIRKVQAAKEEGYQKLMVLQDEKLELENRLSDLEKMKVERDVWRQSEKEQCEEKLRASQMAEEAARRELQSTRLKLQQQIVNTEKAEKEKLENSELKQQISHLQIQVTSLTQSENDLLNSNHMLKDMVERLKQECRNLRSQAEKAQLDVEKTLEEKQIQWLEEKHKLHERITDREEKYNQAKEKLQRAATAQKKRKSLHENKLKRLQEKVEVLEAKKEELETENQVLNRQNVPFEEYTRLQKRLKDIQRRHNEFRSLILVPNMPPTASISPANFQSAVTVPGAELSFPPHLQEEQHQRELSLLRKRLEELETTQRKQLEELGSPGE.

Coiled-coil stretches lie at residues 32-625 (RCEH…SLIL) and 656-689 (HLQE…ELGS). S689 carries the phosphoserine modification.

This sequence belongs to the CEP83 family. In terms of assembly, interacts with CEP164 and IFT20.

Its subcellular location is the cytoplasm. The protein localises to the cytoskeleton. It is found in the microtubule organizing center. The protein resides in the centrosome. It localises to the centriole. Its function is as follows. Component of the distal appendage region of the centriole involved in the initiation of primary cilium assembly. May collaborate with IFT20 in the trafficking of ciliary membrane proteins from the Golgi complex to the cilium during the initiation of primary cilium assembly. The chain is Centrosomal protein of 83 kDa (Cep83) from Mus musculus (Mouse).